Reading from the N-terminus, the 349-residue chain is Very-long-chain 3-oxoacyl-CoA reductase (349 aa).

Residues 19-39 traverse the membrane as a helical segment; sequence AIIFALLLGVFKLTVFSLKFA. NADP(+) is bound by residues V65, D119, N146, Y221, K225, V254, and S256. Y221 acts as the Proton donor in catalysis. The active-site Lowers pKa of active site Tyr is the K225.

The protein belongs to the short-chain dehydrogenases/reductases (SDR) family.

The protein localises to the endoplasmic reticulum membrane. The catalysed reaction is a very-long-chain (3R)-3-hydroxyacyl-CoA + NADP(+) = a very-long-chain 3-oxoacyl-CoA + NADPH + H(+). It functions in the pathway lipid metabolism; fatty acid biosynthesis. Component of the microsomal membrane bound fatty acid elongation system, which produces the 26-carbon very long-chain fatty acids (VLCFA) from palmitate. Catalyzes the reduction of the 3-ketoacyl-CoA intermediate that is formed in each cycle of fatty acid elongation. VLCFAs serve as precursors for ceramide and sphingolipids. The chain is Very-long-chain 3-oxoacyl-CoA reductase from Candida albicans (strain SC5314 / ATCC MYA-2876) (Yeast).